Consider the following 257-residue polypeptide: NAD-dependent protein deacetylase (257 aa).

One can recognise a Deacetylase sirtuin-type domain in the interval 3–252; sequence NGECLEGGRK…DLVLNEVKGI (250 aa). The NAD(+) site is built by alanine 29, threonine 33, phenylalanine 40, arginine 41, glutamine 105, isoleucine 107, aspartate 108, and histidine 123. Phenylalanine 40 is a nicotinamide binding site. Nicotinamide-binding residues include isoleucine 107 and aspartate 108. Catalysis depends on histidine 123, which acts as the Proton acceptor. Zn(2+) contacts are provided by cysteine 131, cysteine 134, cysteine 156, and cysteine 159. NAD(+)-binding residues include serine 195, serine 196, and asparagine 220.

Belongs to the sirtuin family. Class U subfamily. It depends on Zn(2+) as a cofactor.

It is found in the cytoplasm. The enzyme catalyses N(6)-acetyl-L-lysyl-[protein] + NAD(+) + H2O = 2''-O-acetyl-ADP-D-ribose + nicotinamide + L-lysyl-[protein]. NAD-dependent protein deacetylase which modulates the activities of several enzymes which are inactive in their acetylated form. Deacetylates the N-terminal lysine residue of Alba, the major archaeal chromatin protein and that, in turn, increases Alba's DNA binding affinity, thereby repressing transcription. The polypeptide is NAD-dependent protein deacetylase (Caldivirga maquilingensis (strain ATCC 700844 / DSM 13496 / JCM 10307 / IC-167)).